A 383-amino-acid chain; its full sequence is MKENEVKDEKSVDVLSFKQLESQKIVLPQDLFRSSFTWFCYEIYKSLAFRIWMLLWLPLSVWWKLSNNCIYPLIVSLLVLFLGPIFVLVICGLSRKRSLSKQLIQFCKEITENTPSSDPHDWEVVVANLNSYLYENKAWNTKNFFFNATDCEKMFRTTVLEPFSLKKDKAAKVKSFKDSVPYIEEALQVYATGFDKQWKLFITEKSWSPVGLEDVQLPKDIHRSKLTWFLKRIFTIYSLPLWLAFLNCICVSQHFCLAFRILCPGLFFLMMVWLFQNMRTTALLVKMEHKMQFLLTIINEQESGANGWDEIARKMNRYLFEKKAWKNEEFFFDGIDCEWFFSHFFYRLLSAKKSMWLLPLNVELWPYIKEAQLSRNEESLMKK.

The Cytoplasmic segment spans residues 1–42; it reads MKENEVKDEKSVDVLSFKQLESQKIVLPQDLFRSSFTWFCYE. The chain crosses the membrane as a helical span at residues 43 to 63; that stretch reads IYKSLAFRIWMLLWLPLSVWW. Over 64–72 the chain is Extracellular; the sequence is KLSNNCIYP. The chain crosses the membrane as a helical span at residues 73–93; sequence LIVSLLVLFLGPIFVLVICGL. Residues 94 to 232 lie on the Cytoplasmic side of the membrane; the sequence is SRKRSLSKQL…RSKLTWFLKR (139 aa). The helical transmembrane segment at 233 to 253 threads the bilayer; sequence IFTIYSLPLWLAFLNCICVSQ. Position 254 (His-254) is a topological domain, extracellular. The chain crosses the membrane as a helical span at residues 255-275; it reads FCLAFRILCPGLFFLMMVWLF. Topologically, residues 276–383 are cytoplasmic; it reads QNMRTTALLV…SRNEESLMKK (108 aa).

The protein belongs to the DUP/COS family.

It is found in the membrane. This Saccharomyces cerevisiae (strain ATCC 204508 / S288c) (Baker's yeast) protein is Protein COS7 (COS7).